An 822-amino-acid polypeptide reads, in one-letter code: Lysine-specific histone demethylase 2 (822 aa).

Over residues 1-11 (MATPRGRTKKK) the composition is skewed to basic residues. The tract at residues 1–47 (MATPRGRTKKKASFDHSPDSLPLRSSGRQAKKKATETTDEDEDGGSE) is disordered. Phosphoserine occurs at positions 13, 17, and 26. Zn(2+) contacts are provided by cysteine 53, cysteine 58, cysteine 65, cysteine 73, histidine 84, histidine 90, cysteine 92, cysteine 95, cysteine 142, cysteine 147, cysteine 169, and cysteine 185. A CW-type zinc finger spans residues 133–193 (DQQLPYWVQC…HCSLPEDLRV (61 aa)). Residue serine 247 is modified to Phosphoserine. Positions 273-292 (YQPNECGKALCVRPDVMELD) are GLYR1-binding. The 99-residue stretch at 275–373 (PNECGKALCV…TGVLSVGADQ (99 aa)) folds into the SWIRM domain. 383 to 439 (KSVIIIGAGPAGLAAARQLHNFGIKVTVLEAKDRIGGRVWDDKSFKGVTVGRGAQIV) lines the FAD pocket. Histone H3-binding stretches follow at residues 438-467 (IVNGCINNPVALMCEQLGISMHKFGERCDL), 487-498 (FNALLDVVSEWR), and 538-572 (FHLSNLEYACGSNLHQVSARSWDHNEFFAQFAGDH). A GLYR1-binding region spans residues 564-566 (FFA). FAD contacts are provided by residues valine 598, glutamate 795, and 803–805 (QTV). The GLYR1-binding stretch occupies residues 798–814 (NRHFPQTVTGAYLSGVR).

The protein belongs to the flavin monoamine oxidase family. Interacts with its cofactor GLYR1 at nucleosomes; this interaction stimulates H3K4me1 and H3K4me2 demethylation. In contrast to KDM1A, does not form a complex with RCOR1/CoREST. Possible accessory component of the polycomb repressive deubiquitinase (PR-DUB) complex, at least composed of BAP1, one of ASXL1, ASXL2 or (probably) ASXL3 and one of MBD5 or MBD6. The PR-DUB core associates with a number of accessory proteins, including FOXK1, FOXK2, KDM1B, HCFC1 and OGT; KDM1B specifically associates with ASXL2 PR-DUB complexes. FAD is required as a cofactor. The cofactor is Zn(2+).

The protein resides in the nucleus. It localises to the chromosome. It carries out the reaction N(6),N(6)-dimethyl-L-lysyl(4)-[histone H3] + 2 A + 2 H2O = L-lysyl(4)-[histone H3] + 2 formaldehyde + 2 AH2. The catalysed reaction is N(6)-methyl-L-lysyl(4)-[histone H3] + A + H2O = L-lysyl(4)-[histone H3] + formaldehyde + AH2. Histone H3K4me1 and H3K4me2 demethylase activity is inhibited by DNA, this inhibition is released in complex with GLYR1. Its function is as follows. Histone demethylase that demethylates 'Lys-4' of histone H3, a specific tag for epigenetic transcriptional activation, thereby acting as a corepressor. Required for de novo DNA methylation of a subset of imprinted genes during oogenesis. Acts by oxidizing the substrate by FAD to generate the corresponding imine that is subsequently hydrolyzed. Demethylates both mono- and di-methylated 'Lys-4' of histone H3. Has no effect on tri-methylated 'Lys-4', mono-, di- or tri-methylated 'Lys-9', mono-, di- or tri-methylated 'Lys-27', mono-, di- or tri-methylated 'Lys-36' of histone H3, or on mono-, di- or tri-methylated 'Lys-20' of histone H4. Alone, it is unable to demethylate H3K4me on nucleosomes and requires the presence of GLYR1 to achieve such activity, they form a multifunctional enzyme complex that modifies transcribed chromatin and facilitates Pol II transcription through nucleosomes. The chain is Lysine-specific histone demethylase 2 from Homo sapiens (Human).